Consider the following 260-residue polypeptide: Cytosolic Fe-S cluster assembly factor Nubp2 homolog (260 aa).

14–21 (GKGGVGKS) contacts ATP. The [4Fe-4S] cluster site is built by Cys188 and Cys191.

The protein belongs to the Mrp/NBP35 ATP-binding proteins family. NUBP2/CFD1 subfamily. In terms of assembly, heterotetramer of 2 Nubp1 and 2 Nubp2 chains. Requires [4Fe-4S] cluster as cofactor.

Its subcellular location is the cytoplasm. Its function is as follows. Component of the cytosolic iron-sulfur (Fe/S) protein assembly (CIA) machinery. Required for maturation of extramitochondrial Fe-S proteins. The Nubp1-Nubp2 heterotetramer forms a Fe-S scaffold complex, mediating the de novo assembly of an Fe-S cluster and its transfer to target apoproteins. This chain is Cytosolic Fe-S cluster assembly factor Nubp2 homolog, found in Drosophila simulans (Fruit fly).